The primary structure comprises 140 residues: Ergosterol biosynthetic protein 28 homolog (140 aa).

4 helical membrane-spanning segments follow: residues 4–24 (FLNVLRSWLVMVSIIAMGNTL), 52–72 (TFGIWTLLSSVIRCLCAIDIH), 79–99 (ITLWTFLLALGHFLSELFVYG), and 105–125 (IGVLAPLMVASFSILGMLVGL).

Belongs to the ERG28 family. As to expression, ubiquitous; strongly expressed in testis and some cancer cell lines.

The protein resides in the endoplasmic reticulum membrane. The protein is Ergosterol biosynthetic protein 28 homolog of Homo sapiens (Human).